Reading from the N-terminus, the 127-residue chain is Small integral membrane protein 33 (127 aa).

A glycan (N-linked (GlcNAc...) asparagine) is linked at asparagine 15. Residues 38-58 traverse the membrane as a helical segment; that stretch reads PLLAAIIAAFVLLAICIVLAV.

The protein resides in the membrane. This Mus musculus (Mouse) protein is Small integral membrane protein 33.